A 165-amino-acid chain; its full sequence is MICSKVPVRAWFATLGLGCLGLVAVGMALQTLLHLAPCPLCIFQRLLYIMIGFVGLLGFVLPAGRLLWSTLAAGLGVLGFGVAAYQTWMQAFPDLAPECGFTDPNAIERLVDWLGMEWPSMFLATGFCTSRDWELLGLSMANWSVLIFAGIVAYAVLLFVRKDRA.

Residues 1-11 (MICSKVPVRAW) lie on the Cytoplasmic side of the membrane. The helical transmembrane segment at 12 to 28 (FATLGLGCLGLVAVGMA) threads the bilayer. The Periplasmic portion of the chain corresponds to 29-46 (LQTLLHLAPCPLCIFQRL). C38 and C41 are joined by a disulfide. A helical transmembrane segment spans residues 47–61 (LYIMIGFVGLLGFVL). Residues 62–66 (PAGRL) lie on the Cytoplasmic side of the membrane. The helical transmembrane segment at 67 to 84 (LWSTLAAGLGVLGFGVAA) threads the bilayer. At 85–142 (YQTWMQAFPDLAPECGFTDPNAIERLVDWLGMEWPSMFLATGFCTSRDWELLGLSMAN) the chain is on the periplasmic side. C99 and C128 form a disulfide bridge. A helical membrane pass occupies residues 143–161 (WSVLIFAGIVAYAVLLFVR). Residues 162-165 (KDRA) are Cytoplasmic-facing.

The protein belongs to the DsbB family.

It is found in the cell inner membrane. Functionally, required for disulfide bond formation in some periplasmic proteins. Acts by oxidizing the DsbA protein. This chain is Disulfide bond formation protein B, found in Dechloromonas aromatica (strain RCB).